Reading from the N-terminus, the 262-residue chain is Small ribosomal subunit protein uS2 (262 aa).

This sequence belongs to the universal ribosomal protein uS2 family.

The sequence is that of Small ribosomal subunit protein uS2 from Roseiflexus sp. (strain RS-1).